A 241-amino-acid chain; its full sequence is 2-heptyl-1-hydroxyquinolin-4(1H)-one methyltransferase (241 aa).

Belongs to the methyltransferase superfamily. In terms of assembly, monomer.

The protein resides in the cytoplasm. The enzyme catalyses 2-heptyl-1-hydroxy-4(1H)-quinolinone + S-adenosyl-L-methionine = 2-heptyl-1-methoxy-4(1H)-quinolinone + S-adenosyl-L-homocysteine + H(+). Involved in cellular response to chemical stress and may contribute to resistance toward antimicrobial natural compounds as well as drugs. Catalyzes the methylation and detoxification of the P.aeruginosa toxin 2-heptyl-1-hydroxy-4(1H)-quinolinone (HQNO) to 2-heptyl-1-methoxy-4(1H)-quinolinone (HMOQ). The polypeptide is 2-heptyl-1-hydroxyquinolin-4(1H)-one methyltransferase (Mycobacterium bovis (strain BCG / Pasteur 1173P2)).